An 81-amino-acid chain; its full sequence is ATP synthase subunit c (81 aa).

Helical transmembrane passes span 14 to 34 and 60 to 80; these read YLGA…IGTV and LAFA…LLFV.

Belongs to the ATPase C chain family. As to quaternary structure, F-type ATPases have 2 components, F(1) - the catalytic core - and F(0) - the membrane proton channel. F(1) has five subunits: alpha(3), beta(3), gamma(1), delta(1), epsilon(1). F(0) has three main subunits: a(1), b(2) and c(10-14). The alpha and beta chains form an alternating ring which encloses part of the gamma chain. F(1) is attached to F(0) by a central stalk formed by the gamma and epsilon chains, while a peripheral stalk is formed by the delta and b chains.

The protein localises to the cell membrane. Its function is as follows. F(1)F(0) ATP synthase produces ATP from ADP in the presence of a proton or sodium gradient. F-type ATPases consist of two structural domains, F(1) containing the extramembraneous catalytic core and F(0) containing the membrane proton channel, linked together by a central stalk and a peripheral stalk. During catalysis, ATP synthesis in the catalytic domain of F(1) is coupled via a rotary mechanism of the central stalk subunits to proton translocation. Key component of the F(0) channel; it plays a direct role in translocation across the membrane. A homomeric c-ring of between 10-14 subunits forms the central stalk rotor element with the F(1) delta and epsilon subunits. This is ATP synthase subunit c from Clostridium acetobutylicum (strain ATCC 824 / DSM 792 / JCM 1419 / IAM 19013 / LMG 5710 / NBRC 13948 / NRRL B-527 / VKM B-1787 / 2291 / W).